The chain runs to 245 residues: 1-(5-phosphoribosyl)-5-[(5-phosphoribosylamino)methylideneamino] imidazole-4-carboxamide isomerase (245 aa).

The active-site Proton acceptor is Asp11. The active-site Proton donor is Asp132.

The protein belongs to the HisA/HisF family.

The protein localises to the cytoplasm. The enzyme catalyses 1-(5-phospho-beta-D-ribosyl)-5-[(5-phospho-beta-D-ribosylamino)methylideneamino]imidazole-4-carboxamide = 5-[(5-phospho-1-deoxy-D-ribulos-1-ylimino)methylamino]-1-(5-phospho-beta-D-ribosyl)imidazole-4-carboxamide. The protein operates within amino-acid biosynthesis; L-histidine biosynthesis; L-histidine from 5-phospho-alpha-D-ribose 1-diphosphate: step 4/9. This Geobacillus thermodenitrificans (strain NG80-2) protein is 1-(5-phosphoribosyl)-5-[(5-phosphoribosylamino)methylideneamino] imidazole-4-carboxamide isomerase.